The primary structure comprises 115 residues: Cobalt-zinc-cadmium resistance protein CzcI (115 aa).

A signal peptide spans 1 to 20 (MRRFVLIFVLLILPFQFSWA). Residues 93 to 102 (QHSSEFSSLN) are compositionally biased toward polar residues. The tract at residues 93–115 (QHSSEFSSLNARAPDRPQWQRLA) is disordered.

It is found in the periplasm. In terms of biological role, component of the czc cation-efflux system that confers resistance to cobalt, zinc and cadmium. May have a regulatory function. This is Cobalt-zinc-cadmium resistance protein CzcI (czcI) from Cupriavidus metallidurans (strain ATCC 43123 / DSM 2839 / NBRC 102507 / CH34) (Ralstonia metallidurans).